Here is a 601-residue protein sequence, read N- to C-terminus: tRNA 5-methylaminomethyl-2-thiouridine biosynthesis bifunctional protein MnmC (601 aa).

The interval 1–237 is tRNA (mnm(5)s(2)U34)-methyltransferase; it reads MSDPTASPLI…KKQRLEAVAP (237 aa). The tract at residues 252-601 is FAD-dependent cmnm(5)s(2)U34 oxidoreductase; that stretch reads IGGGIAGAAM…FSSRVATGAV (350 aa).

In the N-terminal section; belongs to the methyltransferase superfamily. tRNA (mnm(5)s(2)U34)-methyltransferase family. This sequence in the C-terminal section; belongs to the DAO family. Requires FAD as cofactor.

Its subcellular location is the cytoplasm. It catalyses the reaction 5-aminomethyl-2-thiouridine(34) in tRNA + S-adenosyl-L-methionine = 5-methylaminomethyl-2-thiouridine(34) in tRNA + S-adenosyl-L-homocysteine + H(+). Functionally, catalyzes the last two steps in the biosynthesis of 5-methylaminomethyl-2-thiouridine (mnm(5)s(2)U) at the wobble position (U34) in tRNA. Catalyzes the FAD-dependent demodification of cmnm(5)s(2)U34 to nm(5)s(2)U34, followed by the transfer of a methyl group from S-adenosyl-L-methionine to nm(5)s(2)U34, to form mnm(5)s(2)U34. This Caulobacter sp. (strain K31) protein is tRNA 5-methylaminomethyl-2-thiouridine biosynthesis bifunctional protein MnmC.